The primary structure comprises 407 residues: Tryptophan synthase beta chain (407 aa).

An N6-(pyridoxal phosphate)lysine modification is found at lysine 91.

The protein belongs to the TrpB family. Tetramer of two alpha and two beta chains. It depends on pyridoxal 5'-phosphate as a cofactor.

It carries out the reaction (1S,2R)-1-C-(indol-3-yl)glycerol 3-phosphate + L-serine = D-glyceraldehyde 3-phosphate + L-tryptophan + H2O. It participates in amino-acid biosynthesis; L-tryptophan biosynthesis; L-tryptophan from chorismate: step 5/5. Its function is as follows. The beta subunit is responsible for the synthesis of L-tryptophan from indole and L-serine. This chain is Tryptophan synthase beta chain, found in Streptococcus pneumoniae serotype 2 (strain D39 / NCTC 7466).